The primary structure comprises 565 residues: uncharacterized protein (565 aa).

13 helical membrane passes run 8 to 28 (ISFI…GIFF), 43 to 63 (LAIF…LALI), 95 to 115 (MTYL…ICSI), 137 to 157 (WLIW…IPPL), 167 to 187 (MVVS…GFIV), 227 to 247 (FTGI…FFAY), 268 to 288 (WALF…AVAL), 314 to 334 (IVFG…INGF), 367 to 387 (VVGV…FTVI), 424 to 444 (ATWT…GAIV), 460 to 480 (FLPA…VTII), 482 to 502 (PFIN…TVLG), and 516 to 536 (VMLI…VYVE).

The protein to M.pneumoniae MPN_095 and MPN_096.

The protein localises to the cell membrane. This is an uncharacterized protein from Mycoplasma pneumoniae (strain ATCC 29342 / M129 / Subtype 1) (Mycoplasmoides pneumoniae).